The sequence spans 101 residues: NAD(P)H-quinone oxidoreductase subunit 4L, chloroplastic (101 aa).

Helical transmembrane passes span 2 to 22, 32 to 52, and 61 to 81; these read MLEH…YGLI, MCLE…SDFF, and IFSI…SAIV.

It belongs to the complex I subunit 4L family. In terms of assembly, NDH is composed of at least 16 different subunits, 5 of which are encoded in the nucleus.

The protein resides in the plastid. It localises to the chloroplast thylakoid membrane. It carries out the reaction a plastoquinone + NADH + (n+1) H(+)(in) = a plastoquinol + NAD(+) + n H(+)(out). The enzyme catalyses a plastoquinone + NADPH + (n+1) H(+)(in) = a plastoquinol + NADP(+) + n H(+)(out). Its function is as follows. NDH shuttles electrons from NAD(P)H:plastoquinone, via FMN and iron-sulfur (Fe-S) centers, to quinones in the photosynthetic chain and possibly in a chloroplast respiratory chain. The immediate electron acceptor for the enzyme in this species is believed to be plastoquinone. Couples the redox reaction to proton translocation, and thus conserves the redox energy in a proton gradient. The chain is NAD(P)H-quinone oxidoreductase subunit 4L, chloroplastic from Citrus sinensis (Sweet orange).